The primary structure comprises 225 residues: MAIKDWPEGEGPRDKLLLKGASHLSDAELLAVLLRNGLSGLNAVDLARSLIQEFGGLRSLLCAPKHQVCRLPGVGPVKYAQLQAAAELARRVAQENLQRGQVLTNPDLTRDYLMRQLADRSYEVFAILLLDSQHRVIQFVELFRGTIDSASVYPREVVSLVLEKKAAAVIVCHNHPSGIAEPSQADRRITERLKNALATIDVSLLDHMVVGDREIVSFAERGWIN.

The region spanning 102 to 224 is the MPN domain; the sequence is VLTNPDLTRD…IVSFAERGWI (123 aa). Residues His173, His175, and Asp186 each coordinate Zn(2+). The JAMM motif motif lies at 173–186; it reads HNHPSGIAEPSQAD.

This sequence belongs to the UPF0758 family.

This Shewanella oneidensis (strain ATCC 700550 / JCM 31522 / CIP 106686 / LMG 19005 / NCIMB 14063 / MR-1) protein is UPF0758 protein SO_4248.